We begin with the raw amino-acid sequence, 510 residues long: GMP synthase [glutamine-hydrolyzing] (510 aa).

Positions 5–195 constitute a Glutamine amidotransferase type-1 domain; the sequence is LVIVLDFGGQ…LFNIADLSAD (191 aa). Cysteine 82 functions as the Nucleophile in the catalytic mechanism. Residues histidine 169 and glutamate 171 contribute to the active site. A GMPS ATP-PPase domain is found at 196–385; it reads WTMGSYIEET…LGLHREIVER (190 aa). Residue 223 to 229 participates in ATP binding; it reads SGGIDST.

Homodimer.

It carries out the reaction XMP + L-glutamine + ATP + H2O = GMP + L-glutamate + AMP + diphosphate + 2 H(+). It functions in the pathway purine metabolism; GMP biosynthesis; GMP from XMP (L-Gln route): step 1/1. Its function is as follows. Catalyzes the synthesis of GMP from XMP. This is GMP synthase [glutamine-hydrolyzing] from Natranaerobius thermophilus (strain ATCC BAA-1301 / DSM 18059 / JW/NM-WN-LF).